The following is a 353-amino-acid chain: Photosystem II protein D1 (353 aa).

Thr-2 carries the N-acetylthreonine modification. Thr-2 carries the post-translational modification Phosphothreonine. The next 3 helical transmembrane spans lie at 29–46 (YIGWFGVIMIPTLLTATS), 118–133 (HFFIGICCYMGREWEL), and 142–156 (WIAVAYSAPVAAATA). His-118 contacts chlorophyll a. Tyr-126 contacts pheophytin a. 2 residues coordinate [CaMn4O5] cluster: Asp-170 and Glu-189. Residues 197–218 (FHMLGVAGVFGGSLFSAMHGSL) form a helical membrane-spanning segment. His-198 is a binding site for chlorophyll a. A quinone is bound by residues His-215 and 264–265 (SF). His-215 contributes to the Fe cation binding site. His-272 contacts Fe cation. Residues 274–288 (FLAAWPVIGIWFTAL) form a helical membrane-spanning segment. 4 residues coordinate [CaMn4O5] cluster: His-332, Glu-333, Asp-342, and Ala-344. Positions 345 to 353 (AFEAPSINA) are excised as a propeptide.

The protein belongs to the reaction center PufL/M/PsbA/D family. As to quaternary structure, PSII is composed of 1 copy each of membrane proteins PsbA, PsbB, PsbC, PsbD, PsbE, PsbF, PsbH, PsbI, PsbJ, PsbK, PsbL, PsbM, PsbT, PsbX, PsbY, PsbZ, Psb30/Ycf12, at least 3 peripheral proteins of the oxygen-evolving complex and a large number of cofactors. It forms dimeric complexes. It depends on The D1/D2 heterodimer binds P680, chlorophylls that are the primary electron donor of PSII, and subsequent electron acceptors. It shares a non-heme iron and each subunit binds pheophytin, quinone, additional chlorophylls, carotenoids and lipids. D1 provides most of the ligands for the Mn4-Ca-O5 cluster of the oxygen-evolving complex (OEC). There is also a Cl(-1) ion associated with D1 and D2, which is required for oxygen evolution. The PSII complex binds additional chlorophylls, carotenoids and specific lipids. as a cofactor. Tyr-161 forms a radical intermediate that is referred to as redox-active TyrZ, YZ or Y-Z. Post-translationally, C-terminally processed by CTPA; processing is essential to allow assembly of the oxygen-evolving complex and thus photosynthetic growth.

Its subcellular location is the plastid. It is found in the chloroplast thylakoid membrane. The catalysed reaction is 2 a plastoquinone + 4 hnu + 2 H2O = 2 a plastoquinol + O2. Photosystem II (PSII) is a light-driven water:plastoquinone oxidoreductase that uses light energy to abstract electrons from H(2)O, generating O(2) and a proton gradient subsequently used for ATP formation. It consists of a core antenna complex that captures photons, and an electron transfer chain that converts photonic excitation into a charge separation. The D1/D2 (PsbA/PsbD) reaction center heterodimer binds P680, the primary electron donor of PSII as well as several subsequent electron acceptors. The chain is Photosystem II protein D1 from Chlamydomonas moewusii (Chlamydomonas eugametos).